A 310-amino-acid polypeptide reads, in one-letter code: Putative S-adenosyl-L-methionine-dependent methyltransferase MMAR_0357 (310 aa).

S-adenosyl-L-methionine contacts are provided by residues Asp132 and 161–162 (DL).

Belongs to the UPF0677 family.

Its function is as follows. Exhibits S-adenosyl-L-methionine-dependent methyltransferase activity. This Mycobacterium marinum (strain ATCC BAA-535 / M) protein is Putative S-adenosyl-L-methionine-dependent methyltransferase MMAR_0357.